A 166-amino-acid chain; its full sequence is Heavy metal-associated isoprenylated plant protein 45 (166 aa).

The region spanning 15–78 is the HMA domain; the sequence is LSIVELLVDM…MVKRTGRTAE (64 aa). Positions 26 and 29 each coordinate a metal cation. C163 is subject to Cysteine methyl ester. C163 carries the S-farnesyl cysteine lipid modification. The propeptide at 164–166 is removed in mature form; sequence TIM.

This sequence belongs to the HIPP family.

Functionally, heavy-metal-binding protein. In Arabidopsis thaliana (Mouse-ear cress), this protein is Heavy metal-associated isoprenylated plant protein 45.